The primary structure comprises 235 residues: MHKTYFIADLHLSETRPNLTALFVDFMQHLAPDADAVYILGDLFDFWIGDDERSPLIDTVKNQIRTLVQQGVPCYFIHGNRDFLLGKRFAGDCGLRLLPEYQVIDLYGEPTLICHGDTLCTDDLHYQAFRRKVHRPWLQWLFRRLPLKVRLKIAQNIRTKSSRDKQNKSQAIMDVNPEFTRRIFERFQVKRLIHGHTHRQNIHQIPPHFERIVLGDWGETASILEVTPQDIRFRQ.

Positions 9, 11, 42, 80, and 115 each coordinate Mn(2+). 80 to 81 contacts substrate; that stretch reads NR. Substrate contacts are provided by Asp-123, Ser-161, Lys-165, Lys-168, and His-196. The Mn(2+) site is built by His-196 and His-198.

The protein belongs to the LpxH family. It depends on Mn(2+) as a cofactor.

Its subcellular location is the cell inner membrane. The enzyme catalyses UDP-2-N,3-O-bis[(3R)-3-hydroxytetradecanoyl]-alpha-D-glucosamine + H2O = 2-N,3-O-bis[(3R)-3-hydroxytetradecanoyl]-alpha-D-glucosaminyl 1-phosphate + UMP + 2 H(+). Its pathway is glycolipid biosynthesis; lipid IV(A) biosynthesis; lipid IV(A) from (3R)-3-hydroxytetradecanoyl-[acyl-carrier-protein] and UDP-N-acetyl-alpha-D-glucosamine: step 4/6. Functionally, hydrolyzes the pyrophosphate bond of UDP-2,3-diacylglucosamine to yield 2,3-diacylglucosamine 1-phosphate (lipid X) and UMP by catalyzing the attack of water at the alpha-P atom. Involved in the biosynthesis of lipid A, a phosphorylated glycolipid that anchors the lipopolysaccharide to the outer membrane of the cell. The chain is UDP-2,3-diacylglucosamine hydrolase from Actinobacillus succinogenes (strain ATCC 55618 / DSM 22257 / CCUG 43843 / 130Z).